The primary structure comprises 460 residues: tRNA modification GTPase MnmE (460 aa).

The (6S)-5-formyl-5,6,7,8-tetrahydrofolate site is built by Arg-29, Glu-91, and Lys-132. The TrmE-type G domain maps to 227-383 (GISIALIGKT…LIDTIIKKCG (157 aa)). Asn-237 is a binding site for K(+). Residues 237 to 242 (NVGKSS), 256 to 262 (TNIPGTT), and 281 to 284 (DTAG) contribute to the GTP site. Ser-241 contributes to the Mg(2+) binding site. K(+)-binding residues include Thr-256, Ile-258, and Thr-261. Thr-262 contributes to the Mg(2+) binding site. Position 460 (Lys-460) interacts with (6S)-5-formyl-5,6,7,8-tetrahydrofolate.

It belongs to the TRAFAC class TrmE-Era-EngA-EngB-Septin-like GTPase superfamily. TrmE GTPase family. In terms of assembly, homodimer. Heterotetramer of two MnmE and two MnmG subunits. Requires K(+) as cofactor.

It is found in the cytoplasm. Its function is as follows. Exhibits a very high intrinsic GTPase hydrolysis rate. Involved in the addition of a carboxymethylaminomethyl (cmnm) group at the wobble position (U34) of certain tRNAs, forming tRNA-cmnm(5)s(2)U34. The polypeptide is tRNA modification GTPase MnmE (Prochlorococcus marinus (strain AS9601)).